A 359-amino-acid chain; its full sequence is 3-dehydroquinate synthase (359 aa).

NAD(+)-binding positions include 72 to 77 (EGEIHK), 106 to 110 (GVIGD), 130 to 131 (TS), K143, K152, and 170 to 173 (CLKT). Residues E185, H248, and H264 each coordinate Zn(2+).

This sequence belongs to the sugar phosphate cyclases superfamily. Dehydroquinate synthase family. The cofactor is Co(2+). Requires Zn(2+) as cofactor. NAD(+) serves as cofactor.

It is found in the cytoplasm. It catalyses the reaction 7-phospho-2-dehydro-3-deoxy-D-arabino-heptonate = 3-dehydroquinate + phosphate. It functions in the pathway metabolic intermediate biosynthesis; chorismate biosynthesis; chorismate from D-erythrose 4-phosphate and phosphoenolpyruvate: step 2/7. Functionally, catalyzes the conversion of 3-deoxy-D-arabino-heptulosonate 7-phosphate (DAHP) to dehydroquinate (DHQ). The protein is 3-dehydroquinate synthase of Dehalococcoides mccartyi (strain CBDB1).